A 559-amino-acid polypeptide reads, in one-letter code: Dihydroxy-acid dehydratase 2 (559 aa).

Position 53 (C53) interacts with [2Fe-2S] cluster. D85 contacts Mg(2+). C126 is a binding site for [2Fe-2S] cluster. D127 and K128 together coordinate Mg(2+). K128 carries the N6-carboxylysine modification. C195 provides a ligand contact to [2Fe-2S] cluster. E446 contributes to the Mg(2+) binding site. Residue S472 is the Proton acceptor of the active site.

This sequence belongs to the IlvD/Edd family. As to quaternary structure, homodimer. The cofactor is [2Fe-2S] cluster. Mg(2+) serves as cofactor.

It catalyses the reaction (2R)-2,3-dihydroxy-3-methylbutanoate = 3-methyl-2-oxobutanoate + H2O. The catalysed reaction is (2R,3R)-2,3-dihydroxy-3-methylpentanoate = (S)-3-methyl-2-oxopentanoate + H2O. It functions in the pathway amino-acid biosynthesis; L-isoleucine biosynthesis; L-isoleucine from 2-oxobutanoate: step 3/4. The protein operates within amino-acid biosynthesis; L-valine biosynthesis; L-valine from pyruvate: step 3/4. In terms of biological role, functions in the biosynthesis of branched-chain amino acids. Catalyzes the dehydration of (2R,3R)-2,3-dihydroxy-3-methylpentanoate (2,3-dihydroxy-3-methylvalerate) into 2-oxo-3-methylpentanoate (2-oxo-3-methylvalerate) and of (2R)-2,3-dihydroxy-3-methylbutanoate (2,3-dihydroxyisovalerate) into 2-oxo-3-methylbutanoate (2-oxoisovalerate), the penultimate precursor to L-isoleucine and L-valine, respectively. The sequence is that of Dihydroxy-acid dehydratase 2 from Pseudoalteromonas translucida (strain TAC 125).